We begin with the raw amino-acid sequence, 259 residues long: Phosphatidylglycerol--prolipoprotein diacylglyceryl transferase (259 aa).

7 consecutive transmembrane segments (helical) span residues 9–29 (LGPLAIRWYSICIVTGLILAV), 48–68 (DFILIAFPLAIVGARLYYVIF), 83–103 (IWHGGIAIYGGLLTGALVLFI), 114–133 (DFLDVATPGVMLAQSIGRWG), 167–187 (TPTFLYESLWNLLGFIIIMIL), 197–217 (GEVAFFYLIWYGSGRFVIEGM), and 227–247 (LRVSQWLSVLLVVVGVILIVI). A 1,2-diacyl-sn-glycero-3-phospho-(1'-sn-glycerol) is bound at residue Arg-131.

The protein belongs to the Lgt family.

The protein resides in the cell membrane. It catalyses the reaction L-cysteinyl-[prolipoprotein] + a 1,2-diacyl-sn-glycero-3-phospho-(1'-sn-glycerol) = an S-1,2-diacyl-sn-glyceryl-L-cysteinyl-[prolipoprotein] + sn-glycerol 1-phosphate + H(+). Its pathway is protein modification; lipoprotein biosynthesis (diacylglyceryl transfer). Functionally, catalyzes the transfer of the diacylglyceryl group from phosphatidylglycerol to the sulfhydryl group of the N-terminal cysteine of a prolipoprotein, the first step in the formation of mature lipoproteins. The sequence is that of Phosphatidylglycerol--prolipoprotein diacylglyceryl transferase from Streptococcus mutans serotype c (strain ATCC 700610 / UA159).